The chain runs to 417 residues: Sulfite reductase, dissimilatory-type subunit alpha (417 aa).

8 residues coordinate [4Fe-4S] cluster: Cys-170, Cys-176, Cys-214, Cys-218, Cys-264, Cys-284, Cys-287, and Cys-290. Cys-218 serves as a coordination point for siroheme.

It depends on [4Fe-4S] cluster as a cofactor. The cofactor is siroheme.

The catalysed reaction is [DsrC protein]-trisulfide + NAD(+) + 3 H2O = [DsrC protein]-dithiol + sulfite + NADH + 3 H(+). In terms of biological role, catalyzes the reduction of sulfite to sulfide. This is the terminal oxidation reaction in sulfate respiration. The sequence is that of Sulfite reductase, dissimilatory-type subunit alpha (dsrA) from Allochromatium vinosum (strain ATCC 17899 / DSM 180 / NBRC 103801 / NCIMB 10441 / D) (Chromatium vinosum).